The sequence spans 221 residues: Uracil-DNA glycosylase (221 aa).

Asp-64 acts as the Proton acceptor in catalysis.

This sequence belongs to the uracil-DNA glycosylase (UDG) superfamily. UNG family.

The protein resides in the cytoplasm. It catalyses the reaction Hydrolyzes single-stranded DNA or mismatched double-stranded DNA and polynucleotides, releasing free uracil.. Its function is as follows. Excises uracil residues from the DNA which can arise as a result of misincorporation of dUMP residues by DNA polymerase or due to deamination of cytosine. In Mycoplasmopsis pulmonis (strain UAB CTIP) (Mycoplasma pulmonis), this protein is Uracil-DNA glycosylase.